Consider the following 201-residue polypeptide: Probable molybdenum cofactor guanylyltransferase (201 aa).

GTP is bound by residues 6–8 (LAG), Lys-18, Asp-65, and Asp-97. Asp-97 is a binding site for Mg(2+).

The protein belongs to the MobA family. Mg(2+) is required as a cofactor.

The protein localises to the cytoplasm. The enzyme catalyses Mo-molybdopterin + GTP + H(+) = Mo-molybdopterin guanine dinucleotide + diphosphate. Its function is as follows. Transfers a GMP moiety from GTP to Mo-molybdopterin (Mo-MPT) cofactor (Moco or molybdenum cofactor) to form Mo-molybdopterin guanine dinucleotide (Mo-MGD) cofactor. The polypeptide is Probable molybdenum cofactor guanylyltransferase (Staphylococcus haemolyticus (strain JCSC1435)).